Consider the following 620-residue polypeptide: MALLLPEFDPADVRAGRDLIHRLTADAAGIQRGVLREILSRNSGTEYLRRFLGGAAGDDDDVRDAFKRRVPVSGYEDVKPYVDRVASGGEPSSALLCSDPITCLSRSSGTSGGQQKLLPSTAEELDRKVFFYAVQALVRNMSLHTDHGEDDDGGGGEGMYLMFAFHGDRTLSGLPIQSALTTYYHSRQFQECDIGGFDKCTSPLEAILCPYGEQSMYCQLLCGLLHRCRVDRVGASFAAGLVRGIKFLENHWEEMCFNIRSGQLSDWITHTPLRDAVTGQYLQGSNPALADEIASECARKPWDGIVRRLWPRARYIRTIVTGSMSQYIPILEVYGGGLPLVSPIYASTECAAGINLRPLDPPSHVSYALLPNIAYFEFLEVMDENGEKVQGTTRLDDNLGEVKVVDLVDVKVGRCYELIVTTFAGLYRYRVGDLFTVSGFYNATPLFHFSGRHDVILSIDYEKISEEDLLNAIAETDKFHLRPLGYMLVGSTAYADISTLPGHYILFWELTNTCDSNVAIDIDQTAMEKCCLAVEDHFDEMYRKIRHRGSISALEIRILSHGAFDALMDFFVSRGTSASQYKTPTAIRSKEAMMVLEERVVGRFFSQATPSCRSAEFERR.

The protein belongs to the IAA-amido conjugating enzyme family. Ubiquitous.

Functionally, may catalyze the synthesis of indole-3-acetic acid (IAA)-amino acid conjugates, providing a mechanism for the plant to cope with the presence of excess auxin. This chain is Probable indole-3-acetic acid-amido synthetase GH3.7 (GH3.7), found in Oryza sativa subsp. japonica (Rice).